The primary structure comprises 141 residues: Hemoglobin subunit alpha-D (141 aa).

Residues 1-141 (MLTADDKKIL…VAAVLAEKYR (141 aa)) enclose the Globin domain. The heme b site is built by histidine 58 and histidine 87.

It belongs to the globin family. Heterotetramer of two alpha-D chains and two beta chains. As to expression, red blood cells.

Its function is as follows. Involved in oxygen transport from the lung to the various peripheral tissues. The polypeptide is Hemoglobin subunit alpha-D (HBAD) (Branta canadensis (Canada goose)).